Reading from the N-terminus, the 101-residue chain is Small ribosomal subunit protein uS14 (101 aa).

The segment at 49 to 70 (QSLPRDSSPSRQRNRCNQTGRP) is disordered. A compositionally biased stretch (polar residues) spans 52 to 68 (PRDSSPSRQRNRCNQTG).

It belongs to the universal ribosomal protein uS14 family. As to quaternary structure, part of the 30S ribosomal subunit. Contacts proteins S3 and S10.

Its function is as follows. Binds 16S rRNA, required for the assembly of 30S particles and may also be responsible for determining the conformation of the 16S rRNA at the A site. The sequence is that of Small ribosomal subunit protein uS14 from Yersinia pseudotuberculosis serotype O:1b (strain IP 31758).